We begin with the raw amino-acid sequence, 470 residues long: PTS system trehalose-specific EIIBC component (470 aa).

In terms of domain architecture, PTS EIIB type-1 spans 1-88 (MGELNKSARQ…VKETGIGEST (88 aa)). The active-site Phosphocysteine intermediate; for EIIB activity is cysteine 27. Cysteine 27 carries the post-translational modification Phosphocysteine; by EIIA. The PTS EIIC type-1 domain maps to 108 to 470 (KTLADIFIPI…TYAYARFKHK (363 aa)). The next 10 helical transmembrane spans lie at 110–130 (LADIFIPILPAIVTAGLLMGI), 160–180 (INLIAGTAFTFLPALIGWSAV), 183–203 (FGGNPLLGIVLGVMLVHPDLL), 234–254 (GQVLPILLASYMLAKIEVFLT), 263–283 (LLVVAPITLLLTGFASFIIIG), 301–321 (FGSFAALGGLLYGGFYSALVI), 326–346 (HTFLAVDLQLIGSKLGGTFLW), 347–367 (PMLALSNIAQGSAALAMMFIV), 403–423 (FIIAMVSSGLAGMYISSQGVL), and 443–463 (WGAFAIGMAIVLIVPFAGTYA).

It is found in the cell membrane. It catalyses the reaction alpha,alpha-trehalose(out) + N(pros)-phospho-L-histidyl-[protein] = alpha,alpha-trehalose 6-phosphate(in) + L-histidyl-[protein]. The phosphoenolpyruvate-dependent sugar phosphotransferase system (sugar PTS), a major carbohydrate active transport system, catalyzes the phosphorylation of incoming sugar substrates concomitantly with their translocation across the cell membrane. This system is involved in trehalose transport. The chain is PTS system trehalose-specific EIIBC component (treP) from Bacillus subtilis (strain 168).